Reading from the N-terminus, the 386-residue chain is Orphan methyltransferase M.SssI (386 aa).

Residues 11–386 form the SAM-dependent MTase C5-type domain; it reads LRVFEAFAGI…LEAIIDKIGG (376 aa). Residue Cys141 is part of the active site.

This sequence belongs to the class I-like SAM-binding methyltransferase superfamily. C5-methyltransferase family.

The catalysed reaction is a 2'-deoxycytidine in DNA + S-adenosyl-L-methionine = a 5-methyl-2'-deoxycytidine in DNA + S-adenosyl-L-homocysteine + H(+). This de novo methylase acts completely and exclusively on CG residues in DNA; methylates unmethylated and hemi-methylated DNA. The sequence is that of Orphan methyltransferase M.SssI (sssIM) from Spiroplasma monobiae (strain ATCC 33825 / MQ-1).